Here is a 522-residue protein sequence, read N- to C-terminus: DNA damage-binding protein cmr1 (522 aa).

Polar residues predominate over residues Val34 to Gln47. Disordered regions lie at residues Val34–Ala89 and Gln217–Leu239. The span at Lys49–Val59 shows a compositional bias: basic residues. A WD 1 repeat occupies Leu182–Val223. Acidic residues predominate over residues Glu226–Asp236. WD repeat units lie at residues Pro244–Arg284, Val294–Val331, Leu336–Pro376, Glu381–Lys422, Gly445–Leu488, and Asp491–Met522.

This sequence belongs to the WD repeat DDB2/WDR76 family.

In terms of biological role, DNA-binding protein that binds to both single- and double-stranded DNA. Binds preferentially to UV-damaged DNA. May be involved in DNA-metabolic processes. This chain is DNA damage-binding protein cmr1, found in Aspergillus oryzae (strain ATCC 42149 / RIB 40) (Yellow koji mold).